The following is a 125-amino-acid chain: Large ribosomal subunit protein bL12 (125 aa).

It belongs to the bacterial ribosomal protein bL12 family. In terms of assembly, homodimer. Part of the ribosomal stalk of the 50S ribosomal subunit. Forms a multimeric L10(L12)X complex, where L10 forms an elongated spine to which 2 to 4 L12 dimers bind in a sequential fashion. Binds GTP-bound translation factors.

Functionally, forms part of the ribosomal stalk which helps the ribosome interact with GTP-bound translation factors. Is thus essential for accurate translation. The protein is Large ribosomal subunit protein bL12 of Chelativorans sp. (strain BNC1).